Here is a 254-residue protein sequence, read N- to C-terminus: Galactitol 2-dehydrogenase (L-tagatose-forming) (254 aa).

NAD(+)-binding positions include 21–23, Asp42, 66–67, Tyr159, Lys163, and 192–194; these read SGI, DV, and VAT. Tyr159 serves as the catalytic Proton acceptor. Trp254 lines the Mg(2+) pocket.

It belongs to the short-chain dehydrogenases/reductases (SDR) family. In terms of assembly, homotetramer. A divalent metal cation serves as cofactor.

The catalysed reaction is galactitol + NAD(+) = keto-L-tagatose + NADH + H(+). Its activity is regulated as follows. Inhibited by the chelating agents EDTA and alpha,alpha'-dipyridyl. Inhibited by Zn(2+) and Fe(2+). In terms of biological role, catalyzes the interconversion of galactitol to the rare sugar L-tagatose. Shows activity with a wide range of substrates, and catalyzes the oxidation of a variety of polyvalent aliphatic alcohols and polyols to the corresponding ketones and ketoses, respectively, and in the reverse reaction, it reduces ketones with high stereoselectivity yielding the corresponding S-configurated alcohols. Shows high activity with D-threitol, xylitol, 1,2-hexanediol, 1,2-pentanediol, 2-hexanol, L-erythrulose, D-ribulose and acetoin. Specific for NAD(+). This Cereibacter sphaeroides (Rhodobacter sphaeroides) protein is Galactitol 2-dehydrogenase (L-tagatose-forming).